Consider the following 576-residue polypeptide: Sulfite reductase [NADPH] hemoprotein beta-component (576 aa).

Positions 1 to 12 (MNVKTEPDRSRD) are enriched in basic and acidic residues. Residues 1–25 (MNVKTEPDRSRDVSQPLDKLGPDET) form a disordered region. [4Fe-4S] cluster is bound by residues Cys-441, Cys-447, Cys-486, and Cys-490. Cys-490 contributes to the siroheme binding site.

This sequence belongs to the nitrite and sulfite reductase 4Fe-4S domain family. Alpha(8)-beta(8). The alpha component is a flavoprotein, the beta component is a hemoprotein. Requires siroheme as cofactor. [4Fe-4S] cluster serves as cofactor.

It carries out the reaction hydrogen sulfide + 3 NADP(+) + 3 H2O = sulfite + 3 NADPH + 4 H(+). Its pathway is sulfur metabolism; hydrogen sulfide biosynthesis; hydrogen sulfide from sulfite (NADPH route): step 1/1. Component of the sulfite reductase complex that catalyzes the 6-electron reduction of sulfite to sulfide. This is one of several activities required for the biosynthesis of L-cysteine from sulfate. The sequence is that of Sulfite reductase [NADPH] hemoprotein beta-component from Nitrobacter hamburgensis (strain DSM 10229 / NCIMB 13809 / X14).